A 1557-amino-acid chain; its full sequence is MPEIYGPQPLKPLNTVMRHGFEEQYQSDQLLQSLANDFIFYFDDKRHKTNGNPIPEEDKQRDVNRYYQPITDWKIMKDRQKTVSAALLLCLNLGVDPPDVMKTHPCARVEAWVDPLNFQDSKKAIEQIGKNLQAQYETLSLRTRYKQSLDPCVEDVKRFCNSLRRTSKEDRILFHYNGHGVPKPTKSGEIWVFNRGYTQYIPVSLYDLQTWLGAPCIFVYDCNSAENILINFQKFVQKRIKDDEEGNHDVAAPSPTSAYQDCFQLASCTSDELLLMSPELPADLFSCCLTCPIEISIRIFLMQSPLKDSKYKIFFENSTSNQPFGDSKNSFKSKIPNVNIPGMLSDRRTPLGELNWIFTAITDTIAWTSLPRPLFKKLFRHDLMIAALFRNFLLAKRIMPWYNCHPVSDPELPDSITTHPMWKSWDLAMDEVLTKIVIDLKNAPPATALESQMILQQQETLQNGGSSKSNAQDTKAGSIQTQSRFAVANLSTMSLVNNPALQSRKSISLQSSQQQLQQQQQQQQQFTGFFEQNLTAFELWLKYASNVRHPPEQLPIVLQVLLSQVHRIRALVLLSRFLDLGPWAVYLSLSIGIFPYVLKLLQSPAPELKPILVFIWARIMSIDYKNTQSELIKEKGYMYFVTVLVPDWGVNGMSATNGSAMINSGNPLTMTASQNINGPSSRYYERQQGNRTSNLGHNNLPFYHSNDTTDEQKAMAVFVLASFVRNFPLGQKNCFSLELVNKLCFYIDNSEIPLLRQWCVILLGLLFADNPLNRFVCMNTGAVEILLKSLKDPVPEVRTASIFALKHFISGFQDAEVILRLQQEFEEQYQQLHSQLQHLQNQSHLQQQQSQQQQQHLEQQQMKIEKQIRHCQVMQNQLEVIDLRKLKRQEIGNLISILPLINDGSSLVRKELVVYFSHIVSRYSNFFIVVVFNDLLEEIKLLEKSDINTRNTSDKYSVSQGSIFYTVWKSLLILAEDPFLENKELSKQVIDYILLELSAHKELGGPFAVMEKFLLKRSSKAHQTGKFGFNSSQVQFVKSSLRSFSPNERVDNNAFKKEQQQHDPKISHPMRTSLAKLFQSLGFSESNSDSDTQSSNTSMKSHTSKKGPSGLYLLNGNNNIYPTAETPRFRKHTEPLQLPLNSSFLDYSREYFQEPQMKKQEADEPGSVEYNARLWRRNRNETIIQETQGEKKLSIYGNWSKKLISLNNKSQPKLMKFAQFEDQLITADDRSTITVFDWEKGKTLSKFSNGTPFGTKVTDLKLINEDDSALLLTGSSDGVIKIYRDYQDVDTFKIVSAWRGLTDMLLTPRSTGLLTEWLQIRGSLLTTGDVKVIRVWDAHTETVEVDIPAKTSSLITSLTADQLAGNIFVAGFADGSLRVYDRRLDPRDSMIRRWRAGNDKQGVWINNVHLQRGGYRELVSGATNGVVELWDIRSEDPVESFVDQNVTSQYGSQQKPTTMTCMQVHEHAPIIATGTKQIKIWTTSGDLLNSFKNSHNNGVTSTLAATGIPKSLSYSSTSDAFLSSMAFHPHRMMIAATNSHDSIVNIYKCEDERIDYF.

HEAT repeat units lie at residues 548-586 (RHPP…WAVY), 588-625 (SLSI…IDYK), 777-814 (CMNT…GFQD), and 888-925 (RQEI…RYSN). Low complexity predominate over residues 1084–1098 (SESNSDSDTQSSNTS). The interval 1084 to 1114 (SESNSDSDTQSSNTSMKSHTSKKGPSGLYLL) is disordered. 7 WD repeats span residues 1207-1248 (NNKS…SKFS), 1252-1293 (PFGT…DTFK), 1296-1346 (SAWR…VEVD), 1350-1390 (KTSS…RDSM), 1400-1440 (KQGV…PVES), 1452-1492 (SQQK…NSFK), and 1517-1557 (TSDA…IDYF).

Belongs to the WD repeat RAPTOR family. The target of rapamycin complex 1 (TORC1) is composed of at least KOG1, LST8, TCO89 and either TOR1 (TORC1-A) or TOR2 (TORC1-B). Interacts with PIB2; following activation of PIB2 by glutamine or cysteine. TORC1 binds to and is inhibited by FKBP-rapamycin.

Its subcellular location is the cell membrane. The protein localises to the vacuole membrane. Its function is as follows. Component of TORC1, which regulates multiple cellular processes to control cell growth in response to environmental signals. Nutrient limitation and environmental stress signals cause inactivation of TORC1. Active TORC1 positively controls ribosome biogenesis via control of rRNA, ribosomal protein and tRNA gene expression, and rRNA processing. TORC1 positively controls protein biosynthesis by regulation of mRNA stability, translation initiation factor activity, and high-affinity amino acid permeases that serve to provide amino acids for use by the translation machinery. TORC1 also promotes growth by sequestering a number of nutrient and general stress-responsive transcription factors in the cytoplasm. TORC1 negatively controls macroautophagy, a process to recycle surplus cytoplasmic mass under nutrient starvation conditions. KOG1 may have a role in binding and recruiting substrates of TORC1. In Saccharomyces cerevisiae (strain ATCC 204508 / S288c) (Baker's yeast), this protein is Target of rapamycin complex 1 subunit KOG1 (KOG1).